The sequence spans 233 residues: Large ribosomal subunit protein uL1 (233 aa).

Belongs to the universal ribosomal protein uL1 family. As to quaternary structure, part of the 50S ribosomal subunit.

Binds directly to 23S rRNA. The L1 stalk is quite mobile in the ribosome, and is involved in E site tRNA release. Functionally, protein L1 is also a translational repressor protein, it controls the translation of the L11 operon by binding to its mRNA. This is Large ribosomal subunit protein uL1 from Laribacter hongkongensis (strain HLHK9).